The chain runs to 64 residues: Large ribosomal subunit protein bL28 (64 aa).

A disordered region spans residues 1–23; sequence MSKECYFTGRKTVSSNNRSHAMN. The segment covering 11–23 has biased composition (polar residues); that stretch reads KTVSSNNRSHAMN.

It belongs to the bacterial ribosomal protein bL28 family.

The polypeptide is Large ribosomal subunit protein bL28 (Lactococcus lactis subsp. cremoris (strain SK11)).